The chain runs to 122 residues: Large ribosomal subunit protein uL14 (122 aa).

The protein belongs to the universal ribosomal protein uL14 family. Part of the 50S ribosomal subunit. Forms a cluster with proteins L3 and L19. In the 70S ribosome, L14 and L19 interact and together make contacts with the 16S rRNA in bridges B5 and B8.

Its function is as follows. Binds to 23S rRNA. Forms part of two intersubunit bridges in the 70S ribosome. The polypeptide is Large ribosomal subunit protein uL14 (Beutenbergia cavernae (strain ATCC BAA-8 / DSM 12333 / CCUG 43141 / JCM 11478 / NBRC 16432 / NCIMB 13614 / HKI 0122)).